The following is a 440-amino-acid chain: Thymidine phosphorylase (440 aa).

This sequence belongs to the thymidine/pyrimidine-nucleoside phosphorylase family. In terms of assembly, homodimer.

It catalyses the reaction thymidine + phosphate = 2-deoxy-alpha-D-ribose 1-phosphate + thymine. Its pathway is pyrimidine metabolism; dTMP biosynthesis via salvage pathway; dTMP from thymine: step 1/2. Functionally, the enzymes which catalyze the reversible phosphorolysis of pyrimidine nucleosides are involved in the degradation of these compounds and in their utilization as carbon and energy sources, or in the rescue of pyrimidine bases for nucleotide synthesis. This Klebsiella pneumoniae subsp. pneumoniae (strain ATCC 700721 / MGH 78578) protein is Thymidine phosphorylase.